We begin with the raw amino-acid sequence, 525 residues long: tRNA(Ile)-lysidine synthase (525 aa).

Residue 32 to 37 participates in ATP binding; it reads SGGRDS.

This sequence belongs to the tRNA(Ile)-lysidine synthase family.

It localises to the cytoplasm. It carries out the reaction cytidine(34) in tRNA(Ile2) + L-lysine + ATP = lysidine(34) in tRNA(Ile2) + AMP + diphosphate + H(+). Its function is as follows. Ligates lysine onto the cytidine present at position 34 of the AUA codon-specific tRNA(Ile) that contains the anticodon CAU, in an ATP-dependent manner. Cytidine is converted to lysidine, thus changing the amino acid specificity of the tRNA from methionine to isoleucine. The polypeptide is tRNA(Ile)-lysidine synthase (Psychrobacter sp. (strain PRwf-1)).